The following is a 538-amino-acid chain: CWF19-like protein 1 (538 aa).

Positions 298–324 (QGRKRSSTGRDSKSSPHPKQPRKPPQP) are disordered.

Belongs to the CWF19 family. As to expression, expressed in many brain regions, including cerebellum, thalamus and occipital, parietal and temporal lobes (at protein level). Also expressed in the spinal cord (at protein level).

The sequence is that of CWF19-like protein 1 (CWF19L1) from Homo sapiens (Human).